The following is a 301-amino-acid chain: Putative S-adenosyl-L-methionine-dependent methyltransferase Mflv_5024 (301 aa).

S-adenosyl-L-methionine is bound by residues D129 and 158-159 (DL).

This sequence belongs to the UPF0677 family.

Exhibits S-adenosyl-L-methionine-dependent methyltransferase activity. This chain is Putative S-adenosyl-L-methionine-dependent methyltransferase Mflv_5024, found in Mycolicibacterium gilvum (strain PYR-GCK) (Mycobacterium gilvum (strain PYR-GCK)).